A 344-amino-acid chain; its full sequence is GTP 3',8-cyclase (344 aa).

In terms of domain architecture, Radical SAM core spans 19-239; the sequence is PFGRTIDYLR…ANYTLTDLPD (221 aa). R28 contributes to the GTP binding site. [4Fe-4S] cluster is bound by residues C35 and C39. Residue Y41 participates in S-adenosyl-L-methionine binding. Position 42 (C42) interacts with [4Fe-4S] cluster. R77 contacts GTP. Residue G81 coordinates S-adenosyl-L-methionine. T111 serves as a coordination point for GTP. Position 135 (S135) interacts with S-adenosyl-L-methionine. K171 lines the GTP pocket. M205 contacts S-adenosyl-L-methionine. [4Fe-4S] cluster-binding residues include C268 and C271. 273–275 contributes to the GTP binding site; the sequence is RVR. C285 contacts [4Fe-4S] cluster.

It belongs to the radical SAM superfamily. MoaA family. As to quaternary structure, monomer and homodimer. It depends on [4Fe-4S] cluster as a cofactor.

The enzyme catalyses GTP + AH2 + S-adenosyl-L-methionine = (8S)-3',8-cyclo-7,8-dihydroguanosine 5'-triphosphate + 5'-deoxyadenosine + L-methionine + A + H(+). Its pathway is cofactor biosynthesis; molybdopterin biosynthesis. Functionally, catalyzes the cyclization of GTP to (8S)-3',8-cyclo-7,8-dihydroguanosine 5'-triphosphate. The polypeptide is GTP 3',8-cyclase (Rhodopseudomonas palustris (strain ATCC BAA-98 / CGA009)).